Reading from the N-terminus, the 448-residue chain is Adenylosuccinate synthetase (448 aa).

GTP contacts are provided by residues 22-28 (GDEGKGK) and 50-52 (GHT). D23 serves as the catalytic Proton acceptor. Mg(2+)-binding residues include D23 and G50. IMP is bound by residues 23–26 (DEGK), 48–51 (NAGH), T139, R153, Q234, T249, and R321. H51 functions as the Proton donor in the catalytic mechanism. 317 to 323 (SVTGRPR) lines the substrate pocket. GTP contacts are provided by residues R323, 349-351 (KLD), and 431-433 (STG).

Belongs to the adenylosuccinate synthetase family. In terms of assembly, homodimer. Mg(2+) serves as cofactor.

The protein resides in the cytoplasm. It catalyses the reaction IMP + L-aspartate + GTP = N(6)-(1,2-dicarboxyethyl)-AMP + GDP + phosphate + 2 H(+). Its pathway is purine metabolism; AMP biosynthesis via de novo pathway; AMP from IMP: step 1/2. In terms of biological role, plays an important role in the de novo pathway of purine nucleotide biosynthesis. Catalyzes the first committed step in the biosynthesis of AMP from IMP. This is Adenylosuccinate synthetase from Paraburkholderia phymatum (strain DSM 17167 / CIP 108236 / LMG 21445 / STM815) (Burkholderia phymatum).